Here is a 65-residue protein sequence, read N- to C-terminus: Small ribosomal subunit protein bS21 (65 aa).

Residues 43–65 (VDDRLKRARSKRRAQRANEESNA) form a disordered region. A compositionally biased stretch (basic residues) spans 48–57 (KRARSKRRAQ).

The protein belongs to the bacterial ribosomal protein bS21 family.

This is Small ribosomal subunit protein bS21 from Chloroherpeton thalassium (strain ATCC 35110 / GB-78).